The following is a 442-amino-acid chain: Coiled-coil domain-containing protein 112 (442 aa).

2 coiled-coil regions span residues 23–116 (LEEL…RRIE) and 217–249 (LEEKKKESIQNWKTKKQQKKEEILKLKEKVDTV). Disordered stretches follow at residues 245-272 (KVDTVPLPSQSKAEDSPKQREEQRKKQK), 289-312 (KLASQLREEEEKERKQQRERQRQS), and 392-442 (EKVE…RQGI). Basic and acidic residues-rich tracts occupy residues 256-268 (KAEDSPKQREEQR) and 294-310 (LREEEEKERKQQRERQR). Residues 281–400 (RKSLEMSAKL…KEKVENNVSR (120 aa)) are a coiled coil.

The protein resides in the cytoplasm. Its subcellular location is the cytoskeleton. It is found in the microtubule organizing center. It localises to the centrosome. The protein localises to the centriolar satellite. The chain is Coiled-coil domain-containing protein 112 (Ccdc112) from Mus musculus (Mouse).